We begin with the raw amino-acid sequence, 399 residues long: MEFNFIINKLVQLDQQGLGVYIPRASRSKVSSQQEQQLGQVLNTMGERSAIAQGLKQVITNYDKVQGTDQRVYIVAEGRTCQGFLKVGQKNLFYRDMMGNIKEIKPLCVLDFYVHESCQRQGYGKLLFEYMIQCEQTSPEKLAYDRPSPKLIAFLKKHYNLVKYIAQNNNFVVFDQYFRSDASSQNKQNQNTRSYSQPYSDYSSQIPTNYPQQQQQQSNSKSYPYKQENNIDLMQHSSSRNNKEFLNAGRAILSKEEIYKKDNLSQQNIENTLNNINNSQYSTKSQQQQQYQKDYQLDKYENNWGADKNIKKPPFPGQDRQLDKIQQKIQQTERELDVVNQQIIKQRQNLSQDPLTQNHRAQNVYNTNQFGTSPWAQTGFNYYSTSSSNYGNHYTYYKK.

The region spanning 1–178 (MEFNFIINKL…NNFVVFDQYF (178 aa)) is the N-acetyltransferase domain. Acetyl-CoA contacts are provided by residues 112-125 (FYVHESCQRQGYGK) and 148-157 (SPKLIAFLKK). The span at 183–193 (SSQNKQNQNTR) shows a compositional bias: polar residues. The interval 183–223 (SSQNKQNQNTRSYSQPYSDYSSQIPTNYPQQQQQQSNSKSY) is disordered. Residues 194–223 (SYSQPYSDYSSQIPTNYPQQQQQQSNSKSY) show a composition bias toward low complexity.

The protein belongs to the acetyltransferase ATAT1 family.

It catalyses the reaction L-lysyl-[alpha-tubulin] + acetyl-CoA = N(6)-acetyl-L-lysyl-[alpha-tubulin] + CoA + H(+). Functionally, specifically acetylates 'Lys-40' in alpha-tubulin on the lumenal side of microtubules. Promotes microtubule destabilization and accelerates microtubule dynamics; this activity may be independent of acetylation activity. Acetylates alpha-tubulin with a slow enzymatic rate, due to a catalytic site that is not optimized for acetyl transfer. Enters the microtubule through each end and diffuses quickly throughout the lumen of microtubules. Acetylates only long/old microtubules because of its slow acetylation rate since it does not have time to act on dynamically unstable microtubules before the enzyme is released. This is Alpha-tubulin N-acetyltransferase from Tetrahymena thermophila (strain SB210).